The following is a 591-amino-acid chain: 2-succinyl-5-enolpyruvyl-6-hydroxy-3-cyclohexene-1-carboxylate synthase (591 aa).

This sequence belongs to the TPP enzyme family. MenD subfamily. In terms of assembly, homodimer. Requires Mg(2+) as cofactor. It depends on Mn(2+) as a cofactor. The cofactor is thiamine diphosphate.

It carries out the reaction isochorismate + 2-oxoglutarate + H(+) = 5-enolpyruvoyl-6-hydroxy-2-succinyl-cyclohex-3-ene-1-carboxylate + CO2. Its pathway is quinol/quinone metabolism; 1,4-dihydroxy-2-naphthoate biosynthesis; 1,4-dihydroxy-2-naphthoate from chorismate: step 2/7. It participates in cofactor biosynthesis; phylloquinone biosynthesis. Catalyzes the thiamine diphosphate-dependent decarboxylation of 2-oxoglutarate and the subsequent addition of the resulting succinic semialdehyde-thiamine pyrophosphate anion to isochorismate to yield 2-succinyl-5-enolpyruvyl-6-hydroxy-3-cyclohexene-1-carboxylate (SEPHCHC). This Rippkaea orientalis (strain PCC 8801 / RF-1) (Cyanothece sp. (strain PCC 8801)) protein is 2-succinyl-5-enolpyruvyl-6-hydroxy-3-cyclohexene-1-carboxylate synthase.